We begin with the raw amino-acid sequence, 283 residues long: Protein canopy homolog 3 (283 aa).

The first 35 residues, 1–35 (MEPLPEPTSRPRLRPRPRCLLLLPLLLLLLLLLPA), serve as a signal peptide directing secretion. One can recognise a Saposin B-type domain in the interval 55 to 276 (SKCEVCKYVA…EGIQKASPLT (222 aa)). A glycan (N-linked (GlcNAc...) asparagine) is linked at asparagine 161. Positions 161–187 (NETSAEVADLKKQCDVLVEEFEEVIED) form a coiled coil. Residues 223-283 (KGDTAALGGK…PLTHSPPDEL (61 aa)) are disordered.

This sequence belongs to the canopy family. As to quaternary structure, interacts with HSP90B1; this interaction is disrupted in the presence of ATP. Interacts with TLR1, TLR2, TLR4 and TLR9.

It is found in the endoplasmic reticulum. Toll-like receptor (TLR)-specific co-chaperone for HSP90B1. Required for proper TLR folding, except that of TLR3, and hence controls TLR exit from the endoplasmic reticulum. Consequently, required for both innate and adaptive immune responses. This chain is Protein canopy homolog 3 (CNPY3), found in Sus scrofa (Pig).